We begin with the raw amino-acid sequence, 333 residues long: Acyl-CoA wax alcohol acyltransferase 2 (333 aa).

A run of 3 helical transmembrane segments spans residues 15 to 35 (VFALFQWALSALVIVTTVIIV), 38 to 58 (YLVVFTSYWPVTVLMLTWLAF), and 130 to 150 (TFPGITPYMLTLGAFFWVPFL).

The protein belongs to the diacylglycerol acyltransferase family. As to quaternary structure, monomer. In terms of tissue distribution, expressed in Mueller cells of the retina (at protein level). Abundant in tissues rich in sebaceous glands such as the preputial gland and eyelid.

The protein localises to the endoplasmic reticulum membrane. The catalysed reaction is a long chain fatty alcohol + a fatty acyl-CoA = a wax ester + CoA. It catalyses the reaction all-trans-retinol + an acyl-CoA = an all-trans-retinyl ester + CoA. The enzyme catalyses an acyl-CoA + a 1,2-diacyl-sn-glycerol = a triacyl-sn-glycerol + CoA. It carries out the reaction 9-cis-retinol + a fatty acyl-CoA = 9-cis-retinyl ester + CoA. The catalysed reaction is 11-cis-retinol + a fatty acyl-CoA = 11-cis-retinyl ester + CoA. It catalyses the reaction 13-cis-retinol + a fatty acyl-CoA = 13-cis-retinyl ester + CoA. The enzyme catalyses a 1-acylglycerol + an acyl-CoA = a 1,2-diacylglycerol + CoA. It carries out the reaction 1-O-alkylglycerol + an acyl-CoA = 1-O-alkyl-3-acylglycerol + CoA. The catalysed reaction is a 2-acylglycerol + an acyl-CoA = a 1,2-diacyl-sn-glycerol + CoA. It catalyses the reaction 2-(9Z-octadecenoyl)-glycerol + hexadecanoyl-CoA = 1-hexadecanoyl-2-(9Z-octadecenoyl)-sn-glycerol + CoA. The enzyme catalyses 1,2-di-(9Z-octadecenoyl)-sn-glycerol + hexadecanoyl-CoA = 1,2-di-(9Z)-octadecenoyl-3-hexadecanoyl-sn-glycerol + CoA. It carries out the reaction hexadecan-1-ol + hexadecanoyl-CoA = hexadecanyl hexadecanoate + CoA. The catalysed reaction is hexadecane-1,2-diol + hexadecanoyl-CoA = 2-hydroxyhexadecyl hexadecanoate + CoA. It catalyses the reaction all-trans-retinol + hexadecanoyl-CoA = all-trans-retinyl hexadecanoate + CoA. The enzyme catalyses 1,2-di-(9Z-octadecenoyl)-sn-glycerol + (9Z)-octadecenoyl-CoA = 1,2,3-tri-(9Z-octadecenoyl)-glycerol + CoA. It carries out the reaction hexadecan-1-ol + (9Z)-octadecenoyl-CoA = hexadecanyl (9Z)-octadecenoate + CoA. The catalysed reaction is (9Z)-hexadecen-1-ol + (9Z)-octadecenoyl-CoA = 1-O-(9Z)-hexadecenyl (9Z)-octadecenoate + CoA. It catalyses the reaction octadecan-1-ol + (9Z)-octadecenoyl-CoA = 1-O-octadecyl (9Z)-octadecenoate + CoA. The enzyme catalyses (9Z)-octadecen-1-ol + (9Z)-octadecenoyl-CoA = 1-O-(9Z)-octadecenyl (9Z)-octadecenoate + CoA. It carries out the reaction hexadecan-1-ol + (9Z)-hexadecenoyl-CoA = 1-O-hexadecyl (9Z)-hexadecenoate + CoA. The catalysed reaction is hexadecan-1-ol + octadecanoyl-CoA = hexadecanyl octadecanoate + CoA. It catalyses the reaction 11-cis-retinol + hexadecanoyl-CoA = 11-cis-retinyl hexadecanoate + CoA. The enzyme catalyses 1-O-(9Z-octadecenyl)-glycerol + (9Z)-octadecenoyl-CoA = 1-O-(9Z-octadecyl)-3-(9Z-octadecenoyl)-glycerol + CoA. It carries out the reaction 1-(9Z-octadecenoyl)-glycerol + (9Z)-octadecenoyl-CoA = 1,2-di-(9Z-octadecenoyl)-glycerol + CoA. The catalysed reaction is 11-cis-retinol + tetradecanoyl-CoA = 11-cis-retinyl tetradecanoate + CoA. It catalyses the reaction 9-cis-retinol + tetradecanoyl-CoA = 9-cis-retinyl tetradecanoate + CoA. The enzyme catalyses 9-cis-retinol + hexadecanoyl-CoA = 9-cis-retinyl hexadecanoate + CoA. It carries out the reaction 13-cis-retinol + tetradecanoyl-CoA = 13-cis-retinyl tetradecanoate + CoA. The catalysed reaction is all-trans-retinol + tetradecanoyl-CoA = all-trans-retinyl tetradecanoate + CoA. It catalyses the reaction tetradecan-1-ol + tetradecanoyl-CoA = tetradecanyl tetradecanoate + CoA. With respect to regulation, 11-cis retinoids act as allosteric modulators of acyl-CoA retinol O-fatty-acyltransferase (ARAT) activity by suppressing esterification of 9-cis, 13-cis, or all-trans retinols concurrently increasing the enzyme specificity toward 11-cis isomer. In terms of biological role, acyltransferase that catalyzes the formation of ester bonds between fatty alcohols and fatty acyl-CoAs to form wax monoesters. Shows a preference for medium chain acyl-CoAs from C12 to C16 in length and fatty alcohols shorter than C20, as the acyl donor and acceptor, respectively. Also possesses fatty acyl-CoA retinol acyltransferase (ARAT) activity that preferentially esterifies 11-cis-retinol, a chromophore precursor of bleached opsin pigments in cone cells. Shows higher catalytic efficiency toward 11-cis-retinol versus 9-cis-retinol, 13- cis-retinol and all-trans-retinol substrates. This chain is Acyl-CoA wax alcohol acyltransferase 2 (Awat2), found in Mus musculus (Mouse).